The chain runs to 22 residues: Hemocyanin subunit 4 (22 aa).

Belongs to the tyrosinase family. Hemocyanin subfamily. In terms of tissue distribution, hemolymph.

Its subcellular location is the secreted. The protein localises to the extracellular space. Hemocyanins are copper-containing oxygen carriers occurring freely dissolved in the hemolymph of many mollusks and arthropods. The polypeptide is Hemocyanin subunit 4 (Homarus americanus (American lobster)).